Consider the following 55-residue polypeptide: Transcriptional regulator CdrS (55 aa).

This sequence belongs to the CdrS family.

It is found in the cytoplasm. Its function is as follows. Transcriptional regulator which plays a central role in the regulation of cell division. Activates the expression of the gene encoding the cell division protein FtsZ2, and of other genes encoding proteins predicted to function in critical aspects of cell division. Required for normal cell division but not for cell elongation. May act during the transition from stasis to growth. The CdrSL-FtsZ2 transcriptional network might coordinate cell division timing with cell growth. The sequence is that of Transcriptional regulator CdrS from Halobacterium salinarum (strain ATCC 700922 / JCM 11081 / NRC-1) (Halobacterium halobium).